The primary structure comprises 194 residues: MNLVLASTSPRRKELLTHIGLGRAEFSFSQVAPDIDETPKAGELPRDYVQRLAAEKALAGLALCSGMSQPAVLGSDTIVVLENEILGKPVDEADAKRVLRALSGKAHTVMTAVALAKADQTSVRLVETLVRFCVLSDADIDAYVASQEPMDKAGSYGIQGLGGCFVESIEGSYSCVVGLPLVETRELLSEAGIR.

Asp-76 serves as the catalytic Proton acceptor.

This sequence belongs to the Maf family. YhdE subfamily. A divalent metal cation serves as cofactor.

Its subcellular location is the cytoplasm. The catalysed reaction is dTTP + H2O = dTMP + diphosphate + H(+). It carries out the reaction UTP + H2O = UMP + diphosphate + H(+). Its function is as follows. Nucleoside triphosphate pyrophosphatase that hydrolyzes dTTP and UTP. May have a dual role in cell division arrest and in preventing the incorporation of modified nucleotides into cellular nucleic acids. The sequence is that of dTTP/UTP pyrophosphatase from Shewanella sp. (strain MR-7).